Consider the following 225-residue polypeptide: UPF0758 protein Mhun_2739 (225 aa).

The MPN domain occupies 102 to 225 (RITEPDHILK…VTSLRSLGYL (124 aa)). Positions 174, 176, and 187 each coordinate Zn(2+). Positions 174–187 (HNHPSGNPEPSSED) match the JAMM motif motif.

This sequence belongs to the UPF0758 family.

This chain is UPF0758 protein Mhun_2739, found in Methanospirillum hungatei JF-1 (strain ATCC 27890 / DSM 864 / NBRC 100397 / JF-1).